The chain runs to 136 residues: Urease subunit beta (136 aa).

A disordered region spans residues 113 to 136 (NDEYAGVFGDNGAENVNKKGRKRS).

The protein belongs to the urease beta subunit family. Heterotrimer of UreA (gamma), UreB (beta) and UreC (alpha) subunits. Three heterotrimers associate to form the active enzyme.

Its subcellular location is the cytoplasm. It carries out the reaction urea + 2 H2O + H(+) = hydrogencarbonate + 2 NH4(+). The protein operates within nitrogen metabolism; urea degradation; CO(2) and NH(3) from urea (urease route): step 1/1. The protein is Urease subunit beta of Staphylococcus aureus (strain Newman).